Consider the following 85-residue polypeptide: MKLSLLLVISASMLIDGLVNADGYIRGSNGCKISCLWGNEGCNKECKGFGAYYGYCWTWGLACWCEGLPDDKTWKSESNTCGGKK.

A signal peptide spans 1-21 (MKLSLLLVISASMLIDGLVNA). Positions 22-82 (DGYIRGSNGC…TWKSESNTCG (61 aa)) constitute an LCN-type CS-alpha/beta domain. Intrachain disulfides connect Cys31/Cys81, Cys35/Cys56, Cys42/Cys63, and Cys46/Cys65.

This sequence belongs to the long (4 C-C) scorpion toxin superfamily. Sodium channel inhibitor family. Beta subfamily. As to expression, expressed by the venom gland.

It localises to the secreted. Functionally, binds to sodium channels (Nav) and inhibits them. Recombinant ANEP delays the convulsion seizure of model animals by 18% and shows anti-neuroexcitatory activity. In Olivierus martensii (Manchurian scorpion), this protein is Anti-neuroexcitation peptide 3.